The primary structure comprises 178 residues: MIEIRFHGRGGQGAVTAAQILAKAAFYDGKFCQAFPFFGVERRGAPVMAFTRIDDKKITLRCQIYEPDYVIVQDATLLESVNVVEGLKKDGAVVINTVKDDLDLGYKTYTIDATGIALDVLGVPIVNTAMVGAFAGVTGIVSIESVKKAILDTFKGKLGEKNAKAAEVAYNEMLKKYG.

In terms of assembly, heterotetramer of one alpha, one beta, one delta and one gamma chain.

The catalysed reaction is 2 oxidized [2Fe-2S]-[ferredoxin] + pyruvate + CoA = 2 reduced [2Fe-2S]-[ferredoxin] + acetyl-CoA + CO2 + H(+). This chain is Pyruvate synthase subunit PorC (porC), found in Methanocaldococcus jannaschii (strain ATCC 43067 / DSM 2661 / JAL-1 / JCM 10045 / NBRC 100440) (Methanococcus jannaschii).